We begin with the raw amino-acid sequence, 365 residues long: Fructose-1,6-bisphosphatase class 1 2 (365 aa).

Positions 100, 122, 124, and 125 each coordinate Mg(2+). Residues 125 to 128 (DGSS) and N221 each bind substrate. Mg(2+) is bound at residue E293.

The protein belongs to the FBPase class 1 family. Homotetramer. Mg(2+) serves as cofactor.

The protein localises to the cytoplasm. It catalyses the reaction beta-D-fructose 1,6-bisphosphate + H2O = beta-D-fructose 6-phosphate + phosphate. Its pathway is carbohydrate biosynthesis; gluconeogenesis. This chain is Fructose-1,6-bisphosphatase class 1 2, found in Cupriavidus metallidurans (strain ATCC 43123 / DSM 2839 / NBRC 102507 / CH34) (Ralstonia metallidurans).